The chain runs to 681 residues: Cell cycle checkpoint protein RAD17 (681 aa).

The RAD1-binding motif signature appears at aspartate 17–aspartate 25. Residues valine 42 to phenylalanine 61 are disordered. At threonine 55 the chain carries Phosphothreonine. Phosphoserine occurs at positions 71 and 86. Glycine 137 to threonine 144 is an ATP binding site. 2 disordered regions span residues serine 344–arginine 377 and histidine 606–threonine 681. Serine 359 bears the Phosphoserine mark. The tract at residues leucine 432 to threonine 681 is interaction with MCM7. The segment covering glutamate 631 to serine 662 has biased composition (polar residues). Residue threonine 633 is modified to Phosphothreonine; by ATM. A phosphoserine; by ATR and ATM mark is found at serine 646 and serine 656. Acidic residues predominate over residues aspartate 666 to threonine 681.

It belongs to the rad17/RAD24 family. As to quaternary structure, part of a DNA-binding complex containing RFC2, RFC3, RFC4 and RFC5. Interacts with RAD1 and RAD9 within the 9-1-1 (RAD1-RAD9-HUS1) complex. Interacts with RAD9B, POLE, SNU13 and MCM7. DNA damage promotes interaction with ATR or ATM and disrupts interaction with the 9-1-1 (RAD1-RAD9-HUS1) complex. Interacts (when phosphorylated) with NBN; promoting recruitment of the MRN complex to DNA damage sites. In terms of processing, phosphorylation on Ser-646 and Ser-656 is cell cycle-regulated, enhanced by genotoxic stress, and required for activation of checkpoint signaling. Phosphorylation is mediated by ATR upon UV or replication arrest, whereas it may be mediated both by ATR and ATM upon ionizing radiation. Phosphorylation on both sites is required for interaction with RAD1 but dispensable for interaction with RFC3 or RFC4. Phosphorylation at Thr-633 by ATM in response to DNA damage promotes interaction with NBN and recruitment of the MRN complex to DNA damage sites. As to expression, overexpressed in various cancer cell lines and in colon carcinoma (at protein level). Isoform 2 and isoform 3 are the most abundant isoforms in non irradiated cells (at protein level). Ubiquitous at low levels. Highly expressed in testis, where it is expressed within the germinal epithelium of the seminiferous tubuli. Weakly expressed in seminomas (testicular tumors).

Its subcellular location is the nucleus. The protein localises to the chromosome. In terms of biological role, essential for sustained cell growth, maintenance of chromosomal stability, and ATR-dependent checkpoint activation upon DNA damage. Has a weak ATPase activity required for binding to chromatin. Participates in the recruitment of the 9-1-1 (RAD1-RAD9-HUS1) complex and RHNO1 onto chromatin, and in CHEK1 activation. Involved in homologous recombination by mediating recruitment of the MRN complex to DNA damage sites. May also serve as a sensor of DNA replication progression. The sequence is that of Cell cycle checkpoint protein RAD17 from Homo sapiens (Human).